A 544-amino-acid chain; its full sequence is Chaperonin GroEL (544 aa).

ATP-binding positions include 29 to 32 (TMGP), lysine 50, 86 to 90 (DGTTT), glycine 414, 477 to 479 (NAV), and aspartate 493.

This sequence belongs to the chaperonin (HSP60) family. As to quaternary structure, forms a cylinder of 14 subunits composed of two heptameric rings stacked back-to-back. Interacts with the co-chaperonin GroES.

The protein resides in the cytoplasm. It catalyses the reaction ATP + H2O + a folded polypeptide = ADP + phosphate + an unfolded polypeptide.. Functionally, together with its co-chaperonin GroES, plays an essential role in assisting protein folding. The GroEL-GroES system forms a nano-cage that allows encapsulation of the non-native substrate proteins and provides a physical environment optimized to promote and accelerate protein folding. The polypeptide is Chaperonin GroEL (Campylobacter curvus (strain 525.92)).